The sequence spans 157 residues: Protein MGF 110-13L (157 aa).

2 helical membrane-spanning segments follow: residues Gln14–Cys34 and Leu39–Val59.

It belongs to the asfivirus MGF 110 family.

Its subcellular location is the host membrane. Its function is as follows. Plays a role in virus cell tropism, and may be required for efficient virus replication in macrophages. In African swine fever virus (isolate Tick/Malawi/Lil 20-1/1983) (ASFV), this protein is Protein MGF 110-13L.